The following is a 269-amino-acid chain: Staphylococcal secretory antigen ssaA2 (269 aa).

Residues 1 to 27 (MKKIATATIATAGFATIAIASGNQAHA) form the signal peptide. A run of 7 repeats spans residues 83–85 (YNN), 88–90 (YNN), 91–93 (YNN), 97–99 (YNN), 103–105 (YNN), 106–108 (YSN), and 115–117 (YNN). The segment at 83-115 (YNNYSYNNYNNGYSYNNYSRYNNYSNNNQSYNY) is 7 X 3 AA repeats of Y-[NS]-N. Residues 148-269 (MAPSSNGRSI…SQAAGYNFIH (122 aa)) form the Peptidase C51 domain.

It is found in the secreted. Its function is as follows. Not known; immunogenic protein. In Staphylococcus aureus (strain MRSA252), this protein is Staphylococcal secretory antigen ssaA2 (ssaA2).